Consider the following 124-residue polypeptide: Phosphoribosyl-AMP cyclohydrolase (124 aa).

Aspartate 82 provides a ligand contact to Mg(2+). Cysteine 83 contacts Zn(2+). Mg(2+)-binding residues include aspartate 84 and aspartate 86. Zn(2+) is bound by residues cysteine 99 and cysteine 106.

The protein belongs to the PRA-CH family. Homodimer. The cofactor is Mg(2+). It depends on Zn(2+) as a cofactor.

Its subcellular location is the cytoplasm. The enzyme catalyses 1-(5-phospho-beta-D-ribosyl)-5'-AMP + H2O = 1-(5-phospho-beta-D-ribosyl)-5-[(5-phospho-beta-D-ribosylamino)methylideneamino]imidazole-4-carboxamide. The protein operates within amino-acid biosynthesis; L-histidine biosynthesis; L-histidine from 5-phospho-alpha-D-ribose 1-diphosphate: step 3/9. In terms of biological role, catalyzes the hydrolysis of the adenine ring of phosphoribosyl-AMP. The chain is Phosphoribosyl-AMP cyclohydrolase from Zymomonas mobilis subsp. mobilis (strain ATCC 31821 / ZM4 / CP4).